We begin with the raw amino-acid sequence, 550 residues long: Probable importin subunit alpha-A (550 aa).

Basic and acidic residues predominate over residues 1–30; sequence MSSRDKQDSRKKEFKKSLDSETARRKREEN. The tract at residues 1-34 is disordered; the sequence is MSSRDKQDSRKKEFKKSLDSETARRKREENSIGI. One can recognise an IBB domain in the interval 1–56; sequence MSSRDKQDSRKKEFKKSLDSETARRKREENSIGIRKNAREELMLKRRGIVQPNPST. 8 ARM repeats span residues 116–155, 158–198, 201–241, 256–297, 300–339, 342–381, 385–424, and 428–467; these read YPPIDQVIECGIIPKLNQLLQCNNPKVQFESAWALTNIAS, NRQT…NIAG, VDSR…KIGL, KPQP…YLCD, NTKIQAVIDSGVVPRLVKLLEYPDSIVFTPALRAVGNIVT, SSQTQIVIDNNGVELITRLLAVQKKSIRKESCWALSNITA, SQIDVVVSNPKTVTTLISLLSHSEHDIKREACWALSNSTN, and TKSIQTLVRHNILKHFIDLLNSQDLVILKIVLEGLINIIK.

The protein belongs to the importin alpha family. As to quaternary structure, forms a complex with tnpo/importin subunit beta.

The protein resides in the cytoplasm. The protein localises to the nucleus envelope. In terms of biological role, functions in nuclear protein import via a substrate-importin alpha-beta transport complex that passes though the nuclear pore complexes (NPC). Binds specifically and directly to substrates containing either a simple or bipartite NLS motif. The chain is Probable importin subunit alpha-A from Dictyostelium discoideum (Social amoeba).